The following is a 375-amino-acid chain: All-trans-retinol dehydrogenase [NAD(+)] ADH1B (375 aa).

S2 is subject to N-acetylserine. S23 is subject to Phosphoserine. Phosphotyrosine is present on Y35. Positions 47, 68, 98, 101, 104, 112, and 175 each coordinate Zn(2+). NAD(+) contacts are provided by residues G200 to G205, D224, K229, V293 to V295, and R370.

It belongs to the zinc-containing alcohol dehydrogenase family. As to quaternary structure, homodimer or heterodimer of closely related subunits. Zn(2+) is required as a cofactor.

It localises to the cytoplasm. The catalysed reaction is all-trans-retinol + NAD(+) = all-trans-retinal + NADH + H(+). It catalyses the reaction all-trans-4-hydroxyretinol + NAD(+) = all-trans-4-hydroxyretinal + NADH + H(+). It carries out the reaction all-trans-4-oxoretinol + NAD(+) = all-trans-4-oxoretinal + NADH + H(+). Catalyzes the NAD-dependent oxidation of all-trans-retinol and its derivatives such as all-trans-4-hydroxyretinol and may participate in retinoid metabolism. In vitro can also catalyze the NADH-dependent reduction of all-trans-retinal and its derivatives such as all-trans-4-oxoretinal. Catalyzes in the oxidative direction with higher efficiency. Has the same affinity for all-trans-4-hydroxyretinol and all-trans-4-oxoretinal. This chain is All-trans-retinol dehydrogenase [NAD(+)] ADH1B, found in Pan troglodytes (Chimpanzee).